The chain runs to 502 residues: Cardiolipin synthase (502 aa).

The next 3 helical transmembrane spans lie at 7–27 (VAIL…FWEG), 29–49 (LLGL…LVIS), and 59–79 (IAWL…YLLF). PLD phosphodiesterase domains lie at 237 to 264 (INFR…GDEY) and 415 to 442 (EKGF…DMRS). Active-site residues include H242, K244, D249, H420, K422, and D427.

It belongs to the phospholipase D family. Cardiolipin synthase subfamily.

The protein resides in the cell membrane. The enzyme catalyses 2 a 1,2-diacyl-sn-glycero-3-phospho-(1'-sn-glycerol) = a cardiolipin + glycerol. Its function is as follows. Catalyzes the reversible phosphatidyl group transfer from one phosphatidylglycerol molecule to another to form cardiolipin (CL) (diphosphatidylglycerol) and glycerol. In Geobacillus kaustophilus (strain HTA426), this protein is Cardiolipin synthase (cls).